We begin with the raw amino-acid sequence, 628 residues long: 1-deoxy-D-xylulose-5-phosphate synthase (628 aa).

Thiamine diphosphate is bound by residues His72 and 113–115; that span reads GHS. Residue Asp144 participates in Mg(2+) binding. Thiamine diphosphate-binding positions include 145-146, Asn173, Tyr284, and Glu366; that span reads GA. Residue Asn173 participates in Mg(2+) binding.

Belongs to the transketolase family. DXPS subfamily. Homodimer. Mg(2+) serves as cofactor. The cofactor is thiamine diphosphate.

It carries out the reaction D-glyceraldehyde 3-phosphate + pyruvate + H(+) = 1-deoxy-D-xylulose 5-phosphate + CO2. Its pathway is metabolic intermediate biosynthesis; 1-deoxy-D-xylulose 5-phosphate biosynthesis; 1-deoxy-D-xylulose 5-phosphate from D-glyceraldehyde 3-phosphate and pyruvate: step 1/1. In terms of biological role, catalyzes the acyloin condensation reaction between C atoms 2 and 3 of pyruvate and glyceraldehyde 3-phosphate to yield 1-deoxy-D-xylulose-5-phosphate (DXP). This Shouchella clausii (strain KSM-K16) (Alkalihalobacillus clausii) protein is 1-deoxy-D-xylulose-5-phosphate synthase.